A 304-amino-acid polypeptide reads, in one-letter code: Protein INO2 (304 aa).

Residues 236–290 (VRKWKHVQMEKIRRINTKEAFERLIKSVRTPPKENGKRIPKHILLTCVMNDIKSI) enclose the bHLH domain.

As to quaternary structure, efficient DNA binding requires dimerization with another bHLH protein.

The protein resides in the nucleus. Positive regulatory factor required for depression of the coregulated phospholipid biosynthetic enzymes. Also involved in the expression of ITR1. In Saccharomyces cerevisiae (strain ATCC 204508 / S288c) (Baker's yeast), this protein is Protein INO2 (INO2).